Here is a 363-residue protein sequence, read N- to C-terminus: Pituitary-specific positive transcription factor 1 (363 aa).

The short motif at 5–13 is the 9aaTAD element; that stretch reads AFASSDNFV. The region spanning 195-269 is the POU-specific domain; sequence MDSPEIRELE…ILSKWLEEAE (75 aa). Positions 285–344 form a DNA-binding region, homeobox; sequence KRKRRTTISISAKEALERHFGEQSKPSSQEIMRMAEGLNLEKEVVRVWFCNRRQREKRVK.

Belongs to the POU transcription factor family. Class-1 subfamily. As to expression, pituitary gland.

The protein resides in the nucleus. Transcription factor that activates growth hormone and prolactin genes. Specifically binds to the consensus sequence 5'-TAAAT-3'. In Gallus gallus (Chicken), this protein is Pituitary-specific positive transcription factor 1 (POU1F1).